Here is a 213-residue protein sequence, read N- to C-terminus: Orotate phosphoribosyltransferase (213 aa).

Position 26 (K26) interacts with 5-phospho-alpha-D-ribose 1-diphosphate. 34–35 provides a ligand contact to orotate; that stretch reads FF. 5-phospho-alpha-D-ribose 1-diphosphate contacts are provided by residues 72-73, R99, K100, K103, H105, and 124-132; these read YK and DDVITAGTA. The orotate site is built by T128 and R156.

Belongs to the purine/pyrimidine phosphoribosyltransferase family. PyrE subfamily. As to quaternary structure, homodimer. Mg(2+) is required as a cofactor.

It catalyses the reaction orotidine 5'-phosphate + diphosphate = orotate + 5-phospho-alpha-D-ribose 1-diphosphate. It functions in the pathway pyrimidine metabolism; UMP biosynthesis via de novo pathway; UMP from orotate: step 1/2. In terms of biological role, catalyzes the transfer of a ribosyl phosphate group from 5-phosphoribose 1-diphosphate to orotate, leading to the formation of orotidine monophosphate (OMP). This Alteromonas mediterranea (strain DSM 17117 / CIP 110805 / LMG 28347 / Deep ecotype) protein is Orotate phosphoribosyltransferase.